A 458-amino-acid chain; its full sequence is MADTKPLHQTRFEAAVSVIQSLPKNGSFQPSNEMMLKFYSFYKQATLGPCNTPRPGFWDPVGRYKWDAWNSLGDMSKEDAMIAYVDEMKKILETMPVTEKVEELLQVIGPFYEIVEDKKHGRGSGVTSELGSVLTSTPNGKAVNGKAESSDSGAESDEEQAATKEVREEDEEEESEHSEQEDKDVEQQPGHEKPAESIVNGLTRNHRELVTEEPTPLPSKCLSEPGDKVAIPDTHSPVNDPEADREEDCTEDIAAMQHLTSDSDSEIFCDSMEQFGQDEADHSLLLQDAMLNGDITETSAGGELKDGGEDGKQSGHGAQRKTWSEKSEHFGSRRERPSRMQPGGDGSRSGQIGSGGDGDRWGSDRGPNGSLNEQIAVVLMRLQEDMQNVLQRLHSLEVQTASQAQFLLRESNNQPMEKKPSRWPFGISPGTLALAVVWPFVVHWLMHVFLQKRRRKQT.

Residues 8 to 97 (HQTRFEAAVS…MKKILETMPV (90 aa)) form the ACB domain. Residues 19–28 (IQSLPKNGSF), 39–43 (YSFYK), Lys65, and Tyr84 each bind an acyl-CoA. 2 disordered regions span residues 119–248 (KHGR…REED) and 296–369 (TETS…GPNG). Residues 125–139 (GVTSELGSVLTSTPN) show a composition bias toward polar residues. Positions 154–188 (AESDEEQAATKEVREEDEEEESEHSEQEDKDVEQQ) form a coiled coil. 3 stretches are compositionally biased toward basic and acidic residues: residues 177–195 (HSEQEDKDVEQQPGHEKPA), 303–313 (ELKDGGEDGKQ), and 322–338 (TWSEKSEHFGSRRERPS). Residues 343 to 356 (GGDGSRSGQIGSGG) are compositionally biased toward gly residues. A coiled-coil region spans residues 373 to 402 (EQIAVVLMRLQEDMQNVLQRLHSLEVQTAS). A helical membrane pass occupies residues 430–450 (GTLALAVVWPFVVHWLMHVFL).

It belongs to the ATG37 family.

It localises to the peroxisome membrane. Acyl-CoA binding protein which acts as the peroxisome receptor for pexophagy but is dispensable for aggrephagy and nonselective autophagy. Binds medium- and long-chain acyl-CoA esters. The polypeptide is Acyl-CoA-binding domain-containing protein 5 (acbd5) (Xenopus tropicalis (Western clawed frog)).